Here is an 865-residue protein sequence, read N- to C-terminus: Protein translocase subunit SecA (865 aa).

ATP contacts are provided by residues Q93, 111-115, and D501; that span reads GEGKT. Zn(2+) contacts are provided by C841, C843, C852, and C853.

This sequence belongs to the SecA family. As to quaternary structure, monomer and homodimer. Part of the essential Sec protein translocation apparatus which comprises SecA, SecYEG and auxiliary proteins SecDF-YajC and YidC. Zn(2+) is required as a cofactor.

It is found in the cell inner membrane. Its subcellular location is the cytoplasm. The enzyme catalyses ATP + H2O + cellular proteinSide 1 = ADP + phosphate + cellular proteinSide 2.. Its function is as follows. Part of the Sec protein translocase complex. Interacts with the SecYEG preprotein conducting channel. Has a central role in coupling the hydrolysis of ATP to the transfer of proteins into and across the cell membrane, serving as an ATP-driven molecular motor driving the stepwise translocation of polypeptide chains across the membrane. The chain is Protein translocase subunit SecA from Helicobacter pylori (strain J99 / ATCC 700824) (Campylobacter pylori J99).